The sequence spans 1803 residues: Pyruvate dehydrogenase [NADP(+)], mitochondrial (1803 aa).

Residues 1-37 constitute a mitochondrion transit peptide; that stretch reads MKQSVRPIISNVLRKEVALYSTIIGQDKGKEPTGRTY. 4Fe-4S ferredoxin-type domains follow at residues 747 to 776 and 802 to 831; these read FIPQ…PFVL and FRIQ…MTDA. Residues cysteine 756, cysteine 759, cysteine 762, cysteine 766, cysteine 811, cysteine 814, cysteine 817, and cysteine 821 each coordinate [4Fe-4S] cluster. The Flavodoxin-like domain maps to 1248–1391; the sequence is VTILYGSETG…GFNNWIPSVW (144 aa). In terms of domain architecture, FAD-binding FR-type spans 1425–1650; that stretch reads KSTPVLSITG…IHPTAMEFPD (226 aa). FAD-binding positions include 1458-1469 and 1585-1595; these read YQVGDSLGVFPE and IKPRYYSISSA.

This sequence in the N-terminal section; belongs to the pyruvate:ferredoxin/flavodoxin oxidoreductase family. In terms of assembly, homodimer. Requires FAD as cofactor. The cofactor is FMN. Thiamine diphosphate is required as a cofactor. Iron-sulfur cluster serves as cofactor.

It is found in the mitochondrion. It catalyses the reaction pyruvate + NADP(+) + CoA = acetyl-CoA + CO2 + NADPH. In terms of biological role, pyruvate dehydrogenase [NADP(+)] is one of three enzymes participating in respiratory metabolism. The enzyme is also active with 2-oxobutyrate and oxaloacetate. The enzyme is oxygen sensitive. In Euglena gracilis, this protein is Pyruvate dehydrogenase [NADP(+)], mitochondrial (PNO).